A 261-amino-acid chain; its full sequence is Shikimate dehydrogenase (NADP(+)) (261 aa).

Residues 13–15 (SLS) and threonine 60 each bind shikimate. Catalysis depends on lysine 64, which acts as the Proton acceptor. Positions 85 and 100 each coordinate shikimate. NADP(+)-binding positions include 121 to 125 (GAGGA) and isoleucine 202. Tyrosine 204 is a shikimate binding site. Glycine 225 contributes to the NADP(+) binding site.

This sequence belongs to the shikimate dehydrogenase family. Homodimer.

The enzyme catalyses shikimate + NADP(+) = 3-dehydroshikimate + NADPH + H(+). It participates in metabolic intermediate biosynthesis; chorismate biosynthesis; chorismate from D-erythrose 4-phosphate and phosphoenolpyruvate: step 4/7. Functionally, involved in the biosynthesis of the chorismate, which leads to the biosynthesis of aromatic amino acids. Catalyzes the reversible NADPH linked reduction of 3-dehydroshikimate (DHSA) to yield shikimate (SA). This is Shikimate dehydrogenase (NADP(+)) from Exiguobacterium sibiricum (strain DSM 17290 / CCUG 55495 / CIP 109462 / JCM 13490 / 255-15).